The following is a 444-amino-acid chain: Type VI secretion system baseplate component TssK1 (444 aa).

As to quaternary structure, forms transient higher-order structures that correlated with dynamics of sheath component TssB1. Interacts with TssA1.

In terms of biological role, core component of the H1 type VI (H1-T6SS) secretion system that plays a role in the release of toxins targeting both eukaryotic and prokaryotic species. Functions as a spatio-temporal marker for assembly of contractile apparatus made of TssB1 and TssC1. This role in assembly depends on TssM1. The polypeptide is Type VI secretion system baseplate component TssK1 (Pseudomonas aeruginosa (strain ATCC 15692 / DSM 22644 / CIP 104116 / JCM 14847 / LMG 12228 / 1C / PRS 101 / PAO1)).